The primary structure comprises 186 residues: UPF0303 protein ZMO1353 (186 aa).

It belongs to the UPF0303 family.

The chain is UPF0303 protein ZMO1353 from Zymomonas mobilis subsp. mobilis (strain ATCC 31821 / ZM4 / CP4).